Consider the following 388-residue polypeptide: Lipid-A-disaccharide synthase (388 aa).

The protein belongs to the LpxB family.

The catalysed reaction is a lipid X + a UDP-2-N,3-O-bis[(3R)-3-hydroxyacyl]-alpha-D-glucosamine = a lipid A disaccharide + UDP + H(+). It participates in bacterial outer membrane biogenesis; LPS lipid A biosynthesis. Condensation of UDP-2,3-diacylglucosamine and 2,3-diacylglucosamine-1-phosphate to form lipid A disaccharide, a precursor of lipid A, a phosphorylated glycolipid that anchors the lipopolysaccharide to the outer membrane of the cell. This is Lipid-A-disaccharide synthase from Burkholderia thailandensis (strain ATCC 700388 / DSM 13276 / CCUG 48851 / CIP 106301 / E264).